Reading from the N-terminus, the 525-residue chain is Mitogen-activated protein kinase kinase 5 (525 aa).

One can recognise a Protein kinase domain in the interval 59 to 317 (ETEGGFLGKG…CTELLRHPFI (259 aa)). Residues 65–73 (LGKGSSGSV) and K88 each bind ATP. The active-site Proton acceptor is the D178. The span at 358-367 (SALPLASEGG) shows a compositional bias: low complexity. 2 disordered regions span residues 358-392 (SALP…ERHD) and 438-468 (SASV…AQHR).

Belongs to the protein kinase superfamily. STE Ser/Thr protein kinase family. MAP kinase kinase subfamily. Mg(2+) serves as cofactor.

The enzyme catalyses L-tyrosyl-[protein] + ATP = O-phospho-L-tyrosyl-[protein] + ADP + H(+). The catalysed reaction is L-seryl-[protein] + ATP = O-phospho-L-seryl-[protein] + ADP + H(+). It catalyses the reaction L-threonyl-[protein] + ATP = O-phospho-L-threonyl-[protein] + ADP + H(+). Its function is as follows. Protein kinase which phosphorylates and activates MPK4 in vitro. This chain is Mitogen-activated protein kinase kinase 5, found in Leishmania mexicana.